The chain runs to 305 residues: tRNA dimethylallyltransferase (305 aa).

9 to 16 is a binding site for ATP; sequence GPTASGKS. A substrate-binding site is contributed by 11 to 16; the sequence is TASGKS. The tract at residues 34 to 37 is interaction with substrate tRNA; sequence DSKQ.

It belongs to the IPP transferase family. Monomer. It depends on Mg(2+) as a cofactor.

The catalysed reaction is adenosine(37) in tRNA + dimethylallyl diphosphate = N(6)-dimethylallyladenosine(37) in tRNA + diphosphate. In terms of biological role, catalyzes the transfer of a dimethylallyl group onto the adenine at position 37 in tRNAs that read codons beginning with uridine, leading to the formation of N6-(dimethylallyl)adenosine (i(6)A). The sequence is that of tRNA dimethylallyltransferase from Anaplasma marginale (strain St. Maries).